The following is a 551-amino-acid chain: Glucose-6-phosphate isomerase (551 aa).

D-glucose 6-phosphate contacts are provided by residues 161 to 162, 212 to 217, Q356, E360, H391, and K516; these read GS and SKTFTT. The Proton donor role is filled by E360. Active-site residues include H391 and K516.

The protein belongs to the GPI family. As to quaternary structure, homodimer.

The protein resides in the cytoplasm. It localises to the cytosol. It carries out the reaction alpha-D-glucose 6-phosphate = beta-D-fructose 6-phosphate. The protein operates within carbohydrate degradation; glycolysis; D-glyceraldehyde 3-phosphate and glycerone phosphate from D-glucose: step 2/4. Its function is as follows. In the cytoplasm, catalyzes the conversion of glucose-6-phosphate to fructose-6-phosphate, the second step in glycolysis, and the reverse reaction during gluconeogenesis. In Agaricus bisporus (White button mushroom), this protein is Glucose-6-phosphate isomerase (gpi1).